The chain runs to 365 residues: Casein kinase I homolog hhp1 (365 aa).

Positions 11–279 (YRIGRKIGSG…YLRKLFRDLF (269 aa)) constitute a Protein kinase domain. ATP contacts are provided by residues 17–25 (IGSGSFGDI) and Lys-40. Asp-130 serves as the catalytic Proton acceptor. The span at 301–311 (DQQHQQQLQQQ) shows a compositional bias: low complexity. Residues 301–365 (DQQHQQQLQQ…TGAQYINRPN (65 aa)) are disordered. Polar residues predominate over residues 343–365 (INTTVPVINDPSATGAQYINRPN).

Belongs to the protein kinase superfamily. CK1 Ser/Thr protein kinase family. Casein kinase I subfamily.

The protein localises to the nucleus. It catalyses the reaction L-seryl-[protein] + ATP = O-phospho-L-seryl-[protein] + ADP + H(+). The catalysed reaction is L-threonyl-[protein] + ATP = O-phospho-L-threonyl-[protein] + ADP + H(+). Functionally, involved in DNA repair. Has a probable role in repairing alkylated DNA and may regulate the activity of protein(s) involved in double strand break repair caused by gamma rays. This chain is Casein kinase I homolog hhp1 (hhp1), found in Schizosaccharomyces pombe (strain 972 / ATCC 24843) (Fission yeast).